The chain runs to 181 residues: Photosystem I assembly protein Ycf4 (181 aa).

2 helical membrane passes run 19–39 and 61–81; these read YFWASLLLVGGLMFLLAGISS and IVMMFYGTLSFGLSIYIMATL.

Belongs to the Ycf4 family.

Its subcellular location is the plastid. It is found in the chloroplast thylakoid membrane. Functionally, seems to be required for the assembly of the photosystem I complex. This chain is Photosystem I assembly protein Ycf4, found in Thalassiosira pseudonana (Marine diatom).